We begin with the raw amino-acid sequence, 360 residues long: sn-glycerol-3-phosphate import ATP-binding protein UgpC (360 aa).

An ABC transporter domain is found at 4-235 (LSLKGVRKSY…PATTFVASFI (232 aa)). An ATP-binding site is contributed by 37–44 (GPSGCGKS).

It belongs to the ABC transporter superfamily. sn-glycerol-3-phosphate importer (TC 3.A.1.1.3) family. In terms of assembly, the complex is composed of two ATP-binding proteins (UgpC), two transmembrane proteins (UgpA and UgpE) and a solute-binding protein (UgpB).

It localises to the cell inner membrane. The catalysed reaction is sn-glycerol 3-phosphate(out) + ATP + H2O = sn-glycerol 3-phosphate(in) + ADP + phosphate + H(+). Its function is as follows. Part of the ABC transporter complex UgpBAEC involved in sn-glycerol-3-phosphate (G3P) import. Responsible for energy coupling to the transport system. The protein is sn-glycerol-3-phosphate import ATP-binding protein UgpC of Burkholderia pseudomallei (strain K96243).